The sequence spans 321 residues: Arabinan endo-1,5-alpha-L-arabinosidase A (321 aa).

An N-terminal signal peptide occupies residues 1–19 (MYSLLTALSVPLLAGLAHG). The active-site Proton acceptor is aspartate 34. Residue asparagine 192 is glycosylated (N-linked (GlcNAc...) asparagine). The active-site Proton donor is the glutamate 200.

This sequence belongs to the glycosyl hydrolase 43 family.

It localises to the secreted. The enzyme catalyses Endohydrolysis of (1-&gt;5)-alpha-arabinofuranosidic linkages in (1-&gt;5)-arabinans.. Its pathway is glycan metabolism; L-arabinan degradation. Functionally, endo-1,5-alpha-L-arabinanase involved in degradation of pectin. Its preferred substrate is linear 1,5-alpha-L-arabinan. This is Arabinan endo-1,5-alpha-L-arabinosidase A (abnA) from Aspergillus aculeatus.